Consider the following 292-residue polypeptide: Probable endonuclease 4 (292 aa).

Zn(2+) is bound by residues His-70, His-111, Glu-146, Asp-180, His-183, His-215, Asp-228, His-230, and Glu-260.

This sequence belongs to the AP endonuclease 2 family. Requires Zn(2+) as cofactor.

It carries out the reaction Endonucleolytic cleavage to 5'-phosphooligonucleotide end-products.. Endonuclease IV plays a role in DNA repair. It cleaves phosphodiester bonds at apurinic or apyrimidinic (AP) sites, generating a 3'-hydroxyl group and a 5'-terminal sugar phosphate. The protein is Probable endonuclease 4 of Shouchella clausii (strain KSM-K16) (Alkalihalobacillus clausii).